The sequence spans 1469 residues: MDISADVDQIIAQAPDWTFAGDCALLALMKRISQNLEERGERTSRNLRDFETSVKQVDIALNNATTSLRSLQFGNQFVEYRVEEVDDADLAMPEEKKKKPELPLKSSEELAKEFLENNLRMFRKNYEPVTIEVPDSDDEDGPVHSTTVFRAKNPYDAIPLPYIIGTKEWQEHKYAGLYDSKENSEDDRSEEFSSSSSDEKEPETKKIATPANKLEEQHLSDSSSLASFAREPAIVSPVINPAVQVAEPVIRTQPRPIINSQRNPHERDMFAALRQSPPSDDPPSTSSSPTSSPAFRNPSSRLPIVSTASLSSSSSSPAQQPPRLFDEAVSTQTPKEAEIKPSQTKRMPVNLFNEDEFKSFMSEIVDKVQSKTPSSSVSPATTISTKEPPKTKKPVEEYPKPGPPKQIVEQTVPKRVNLFDDSPPLSPTPRSEPVFNNTKATGAIPKRSPVVVANNDEDNSLFGSSPAMPKENPSKKPPKPVTKSLFDDDLEDDDFLSSFTPKAKPPEQKLLSKPKPSLFDDDDLDIDDIFTKPSAQPKKLSERVAGKTSLFEDDDQDDVTDLFGSKKAKVIPKETSSGVSPNKNVETPVASKKSLFDDIEDEDLFGTPKAKNLIRSEPDNDPEAVGEDKKQSEIAEQKSKNIETGEKQHQVIAENASVPILRDSPPPMEVTEQKSDDKEWEAVKDDTSAANITKSKDLFSEDLTDDELFSSTSNNMAEPKSANETNEFNKPIEKYTSQTEENVSPVNPPTKLSIKPTDLFNEDFSDDDTFLSASMSKNEPLVGTENEDIKKPSEVQLVKEIKAEELPQQLPENKIYEITAVVEKDELVPEMLSKPQIDEPVSETPPPDDYQSNVDPIISMVADVTNKTSVDTLTPRKPADLAAAQQIMQNYSNLFSDEPPDDSEFFQTLGSSGLSSLSASKIFDNEHDFFEPALPNIPSATKPSPVTPGDQPSVSSDYGAMCLFSDVPPEDNDHAGEEVQKEAEPQKDELASTTRIHTIFYDDFSETARAGAVQPAPKRFPFDDEPPPADETDRSEVKETPELQKPTSPVKKLKMPNININVHALLPGSGSVPKLIRKQESSSSERDEPQATVQTEAEAPSSGQNTVSSADGVLQHVNKSRARGPAKRRPSTRRGRKENYAKSLLDAGQNEGPTASTRDSPEVEHSERSSIKAPSPQYVKPEKLFSTPAQQIQPQLQRPPPSNTGGSFLDSPDEDDSFFNSVPTKTVEGKQGTDPPKSYRSFLDSPDADDKLFSDLENNKAGINVVPVEKKPPKMANSFLASPDEDDFLFDSVKTNATTTAQKAFAAEIMNAFQKVTTAPPKPSNAKEAAKPKSQAAPKLFDDSDDDDDDLFARAPSIQTASKPVQAKQPPKPAATSLFSSDDEEAEVPVKSAPAKKLPVKPSKSLFSDDDDDDDLFGGSSTSKAAAAKKTKPAARTASKPPASKTTTPTATIPSNSGDNPLADLLDFK.

S136 is modified (phosphoserine). 2 disordered regions span residues 178 to 349 (YDSK…RMPV) and 367 to 546 (KVQS…RVAG). The segment covering 197 to 206 (SDEKEPETKK) has biased composition (basic and acidic residues). S227 bears the Phosphoserine mark. Low complexity-rich tracts occupy residues 276-293 (SPPS…TSSP) and 306-316 (STASLSSSSSS). The LFa 1 motif lies at 351–372 (LFNEDEFKSFMSEIVDKVQSKT). The segment covering 370-385 (SKTPSSSVSPATTIST) has biased composition (polar residues). Residues 387-399 (EPPKTKKPVEEYP) show a composition bias toward basic and acidic residues. Phosphoserine occurs at positions 422 and 426. Positions 519–528 (FDDDDLDIDD) are enriched in acidic residues. The LFa 5 motif lies at 550 to 563 (LFEDDDQDDVTDLF). The segment at 571 to 591 (IPKETSSGVSPNKNVETPVAS) is disordered. Residues 574–585 (ETSSGVSPNKNV) show a composition bias toward polar residues. A Phosphoserine modification is found at S580. T587 is modified (phosphothreonine). The short motif at 595–605 (LFDDIEDEDLF) is the LFa 6 element. 3 disordered regions span residues 607 to 760 (TPKA…TDLF), 933 to 1254 (ALPN…KLFS), and 1316 to 1469 (VTTA…LDFK). 2 stretches are compositionally biased toward basic and acidic residues: residues 626–649 (GEDK…EKQH) and 671–687 (TEQK…KDDT). T693 is subject to Phosphothreonine. An LFa 8 motif is present at residues 698–709 (LFSEDLTDDELF). Polar residues-rich tracts occupy residues 709-728 (FSST…TNEF), 735-745 (YTSQTEENVSP), and 938-956 (PSAT…SVSS). 3 stretches are compositionally biased toward basic and acidic residues: residues 971 to 990 (DNDH…KDEL), 1031 to 1042 (ETDRSEVKETPE), and 1077 to 1089 (RKQE…RDEP). Residues 1091–1109 (ATVQTEAEAPSSGQNTVSS) show a composition bias toward polar residues. Positions 1118–1136 (NKSRARGPAKRRPSTRRGR) are enriched in basic residues. The segment covering 1159 to 1170 (DSPEVEHSERSS) has biased composition (basic and acidic residues). Residues S1241, S1245, S1254, S1344, S1380, S1381, and S1408 each carry the phosphoserine modification. Composition is skewed to low complexity over residues 1417–1426 (FGGSSTSKAA) and 1434–1452 (AART…PTAT).

Belongs to the FAM21 family. As to quaternary structure, component of the WASH complex.

Functionally, acts at least in part as component of the WASH complex which may regulate wash nucleation-promoting factor (NPF) activity and is required for its membrane targeting during endosomal sorting. This is WASH complex subunit 2 from Drosophila melanogaster (Fruit fly).